A 222-amino-acid chain; its full sequence is Large ribosomal subunit protein uL1 (222 aa).

Belongs to the universal ribosomal protein uL1 family. As to quaternary structure, part of the 50S ribosomal subunit.

Binds directly to 23S rRNA. Probably involved in E site tRNA release. Its function is as follows. Protein L1 is also a translational repressor protein, it controls the translation of its operon by binding to its mRNA. The polypeptide is Large ribosomal subunit protein uL1 (Pyrobaculum islandicum (strain DSM 4184 / JCM 9189 / GEO3)).